The following is a 534-amino-acid chain: Beta-glucosidase 31 (534 aa).

Positions 1 to 22 are cleaved as a signal peptide; the sequence is MAIKLIALVITLCVASWDVAQG. Gln-51 serves as a coordination point for a beta-D-glucoside. N-linked (GlcNAc...) asparagine glycosylation occurs at Asn-68. A beta-D-glucoside contacts are provided by residues His-154 and 199 to 200; that span reads NE. Glu-200 serves as the catalytic Proton donor. Cysteines 219 and 227 form a disulfide. Residue Tyr-344 coordinates a beta-D-glucoside. Residue Asn-374 is glycosylated (N-linked (GlcNAc...) asparagine). An a beta-D-glucoside-binding site is contributed by Glu-417. Catalysis depends on Glu-417, which acts as the Nucleophile. Asn-425 carries N-linked (GlcNAc...) asparagine glycosylation. A beta-D-glucoside contacts are provided by residues Trp-467, 474-475, and Phe-483; that span reads EW.

It belongs to the glycosyl hydrolase 1 family.

It catalyses the reaction Hydrolysis of terminal, non-reducing beta-D-glucosyl residues with release of beta-D-glucose.. This is Beta-glucosidase 31 from Arabidopsis thaliana (Mouse-ear cress).